Consider the following 287-residue polypeptide: mRNA-capping enzyme regulatory subunit OPG124 (287 aa).

Belongs to the orthopoxvirus mRNA-capping enzyme regulatory subunit family. In terms of assembly, interacts with the catalytic subunit OPG113.

It localises to the virion. Its function is as follows. Regulatory subunit of the mRNA cap enzyme which stabilizes the catalytic subunit and enhances its methyltransferase activity through an allosteric mechanism. Heterodimeric mRNA capping enzyme catalyzes the linkage of a N7-methyl-guanosine moiety to the first transcribed nucleotide (cap 0 structure), whereas the methyltransferase OPG102 is responsible for a second methylation at the 2'-O position of the ribose (cap 1 structure). Also involved in early viral gene transcription termination and intermediate viral gene transcription initiation. Early gene transcription termination requires the termination factor VTF, the DNA-dependent ATPase NPH-I/OPG123 and the RAP94/OPG109 subunit of the viral RNA polymerase, as well as the presence of a specific termination motif. Binds, together with RAP94/OPG109, to the termination motif 5'-UUUUUNU-3' in the nascent early mRNA. The polypeptide is mRNA-capping enzyme regulatory subunit OPG124 (OPG124) (Bos taurus (Bovine)).